A 328-amino-acid polypeptide reads, in one-letter code: Tetraacyldisaccharide 4'-kinase (328 aa).

55-62 (TAGGNGKT) serves as a coordination point for ATP.

Belongs to the LpxK family.

It catalyses the reaction a lipid A disaccharide + ATP = a lipid IVA + ADP + H(+). It functions in the pathway glycolipid biosynthesis; lipid IV(A) biosynthesis; lipid IV(A) from (3R)-3-hydroxytetradecanoyl-[acyl-carrier-protein] and UDP-N-acetyl-alpha-D-glucosamine: step 6/6. In terms of biological role, transfers the gamma-phosphate of ATP to the 4'-position of a tetraacyldisaccharide 1-phosphate intermediate (termed DS-1-P) to form tetraacyldisaccharide 1,4'-bis-phosphate (lipid IVA). The polypeptide is Tetraacyldisaccharide 4'-kinase (Escherichia coli (strain SMS-3-5 / SECEC)).